The following is a 201-amino-acid chain: GTP cyclohydrolase 1 (201 aa).

Zn(2+) is bound by residues C90, H93, and C163.

This sequence belongs to the GTP cyclohydrolase I family. In terms of assembly, toroid-shaped homodecamer, composed of two pentamers of five dimers.

It carries out the reaction GTP + H2O = 7,8-dihydroneopterin 3'-triphosphate + formate + H(+). It functions in the pathway cofactor biosynthesis; 7,8-dihydroneopterin triphosphate biosynthesis; 7,8-dihydroneopterin triphosphate from GTP: step 1/1. The protein is GTP cyclohydrolase 1 of Streptomyces avermitilis (strain ATCC 31267 / DSM 46492 / JCM 5070 / NBRC 14893 / NCIMB 12804 / NRRL 8165 / MA-4680).